The primary structure comprises 293 residues: CDP-abequose synthase (293 aa).

Residue threonine 113 coordinates substrate. Catalysis depends on tyrosine 130, which acts as the Proton acceptor.

The protein belongs to the NAD(P)-dependent epimerase/dehydratase family.

The catalysed reaction is CDP-alpha-D-abequose + NADP(+) = CDP-4-dehydro-3,6-dideoxy-alpha-D-glucose + NADPH + H(+). It participates in bacterial outer membrane biogenesis; LPS O-antigen biosynthesis. In Salmonella muenchen, this protein is CDP-abequose synthase.